A 220-amino-acid chain; its full sequence is Small ribosomal subunit protein uS3 (220 aa).

Positions 39-107 constitute a KH type-2 domain; sequence IREHVEGRLK…RVHINISEIK (69 aa).

Belongs to the universal ribosomal protein uS3 family. Part of the 30S ribosomal subunit. Forms a tight complex with proteins S10 and S14.

Functionally, binds the lower part of the 30S subunit head. Binds mRNA in the 70S ribosome, positioning it for translation. This is Small ribosomal subunit protein uS3 from Shouchella clausii (strain KSM-K16) (Alkalihalobacillus clausii).